A 377-amino-acid polypeptide reads, in one-letter code: Pyruvate dehydrogenase E1 component subunit alpha, mitochondrial (377 aa).

Residues 1-26 (MLSNFLKVNSKALGHIRTFASKSGEI) constitute a mitochondrion transit peptide. 10 residues coordinate pyruvate: histidine 83, tyrosine 109, arginine 110, glycine 156, valine 158, aspartate 187, glycine 188, alanine 189, asparagine 216, and tyrosine 218. Thiamine diphosphate contacts are provided by tyrosine 109, arginine 110, glycine 156, valine 158, aspartate 187, glycine 188, alanine 189, and asparagine 216. Aspartate 187 serves as a coordination point for Mg(2+). Residues asparagine 216 and tyrosine 218 each contribute to the Mg(2+) site. Histidine 283 is a binding site for thiamine diphosphate.

As to quaternary structure, tetramer of 2 alpha and 2 beta subunits. Requires thiamine diphosphate as cofactor. Mg(2+) serves as cofactor.

It localises to the mitochondrion matrix. The catalysed reaction is N(6)-[(R)-lipoyl]-L-lysyl-[protein] + pyruvate + H(+) = N(6)-[(R)-S(8)-acetyldihydrolipoyl]-L-lysyl-[protein] + CO2. Its activity is regulated as follows. E1 activity is regulated by phosphorylation (inactivation) and dephosphorylation (activation) of the alpha subunit. Its function is as follows. The pyruvate dehydrogenase complex catalyzes the overall conversion of pyruvate to acetyl-CoA and CO(2). It contains multiple copies of three enzymatic components: pyruvate dehydrogenase (E1), dihydrolipoamide acetyltransferase (E2) and lipoamide dehydrogenase (E3). In Dictyostelium discoideum (Social amoeba), this protein is Pyruvate dehydrogenase E1 component subunit alpha, mitochondrial (pdhA).